The chain runs to 317 residues: DNA-directed RNA polymerase subunit alpha (317 aa).

The alpha N-terminal domain (alpha-NTD) stretch occupies residues 1 to 229 (MLNEFIYPDK…KHYELLENIF (229 aa)). The alpha C-terminal domain (alpha-CTD) stretch occupies residues 245–317 (AEKLSLSIEE…ELGMNIETQR (73 aa)).

It belongs to the RNA polymerase alpha chain family. Homodimer. The RNAP catalytic core consists of 2 alpha, 1 beta, 1 beta' and 1 omega subunit. When a sigma factor is associated with the core the holoenzyme is formed, which can initiate transcription.

The catalysed reaction is RNA(n) + a ribonucleoside 5'-triphosphate = RNA(n+1) + diphosphate. Its function is as follows. DNA-dependent RNA polymerase catalyzes the transcription of DNA into RNA using the four ribonucleoside triphosphates as substrates. The protein is DNA-directed RNA polymerase subunit alpha of Aquifex aeolicus (strain VF5).